The chain runs to 438 residues: Neutral metalloprotease ShpI (438 aa).

Positions 1–26 (MINKKKLVTSLVTSSLLATFTLGSFA) are cleaved as a signal peptide. A propeptide spanning residues 27–101 (DAHTYIINNE…KSENALSNSK (75 aa)) is cleaved from the precursor. H242 lines the Zn(2+) pocket. The active site involves E243. Residues H246 and E269 each contribute to the Zn(2+) site.

Belongs to the peptidase M30 family. Zn(2+) serves as cofactor. Post-translationally, several different N-terminal ends may be produced, the favored N-terminus is position 102.

Its subcellular location is the secreted. Its activity is regulated as follows. Inhibited by metal- and zinc-specific inhibitors, such as EDTA and 1,10-phenanthroline in vitro. Is resistant to all inhibitors of serine, cysteine and aspartic proteases. Functionally, protease that has a low substrate specificity. Catalyzes the hydrolysis of glucagon, melittin and oxidized beta-insulin at various positions in vitro. Is not able to cleave elastin or the synthetic substrates FAGLA (a substrate for neutral proteinases) and FALGPA (a substrate for collagenase). This is Neutral metalloprotease ShpI from Staphylococcus hyicus.